Consider the following 122-residue polypeptide: Large ribosomal subunit protein bL12 (122 aa).

It belongs to the bacterial ribosomal protein bL12 family. In terms of assembly, homodimer. Part of the ribosomal stalk of the 50S ribosomal subunit. Forms a multimeric L10(L12)X complex, where L10 forms an elongated spine to which 2 to 4 L12 dimers bind in a sequential fashion. Binds GTP-bound translation factors.

Its function is as follows. Forms part of the ribosomal stalk which helps the ribosome interact with GTP-bound translation factors. Is thus essential for accurate translation. In Stenotrophomonas maltophilia (strain R551-3), this protein is Large ribosomal subunit protein bL12.